The following is a 249-amino-acid chain: 2-dehydro-3-deoxy-L-rhamnonate dehydrogenase (NAD(+)) (249 aa).

Residue Y156 is the Proton acceptor of the active site.

This sequence belongs to the short-chain dehydrogenases/reductases (SDR) family. Homotetramer.

It carries out the reaction 2-dehydro-3-deoxy-L-rhamnonate + NAD(+) = 2,4-didehydro-3-deoxy-L-rhamnonate + NADH + H(+). It functions in the pathway carbohydrate degradation; L-rhamnose degradation. Functionally, catalyzes the NAD(+)-dependent dehydrogenation of 2-dehydro-3-deoxy-L-rhamnonate to form 2,4-didehydro-3-deoxy-L-rhamnonate. Does not show any detectable activity in the presence of NADP(+). Catalyzes the fourth step in an alternative pathway for rhamnose utilization that does not involve phosphorylated intermediates. The polypeptide is 2-dehydro-3-deoxy-L-rhamnonate dehydrogenase (NAD(+)) (Sphingomonas sp. (strain SKA58)).